We begin with the raw amino-acid sequence, 410 residues long: MEEEYLNPINIFSEIGRLKKVLLHRPGEELENLTPLIMKNFLFDDIPYLKVARQEHEVFVNILKDNSVEIEYVEDLVSEVLASSVALKNKFISQFILEAEIKTDGVINILKDYFSNLTVDNMVSKMISGVAREELKDCEFSLDDWVNGSSLFVIDPMPNVLFTRDPFASIGNGITINKMYTKVRRRETIFAEYIFKYHSAYKENVPIWFNRWEETSLEGGDEFVLNKDLLVIGISERTEAGSVEKLAASLFKNKAPFSTILAFKIPKNRAYMHLDTVFTQIDYSVFTSFTSDDMYFSIYVLTYNSNSNKINIKKEKAKLKDVLSFYLGRKIDIIKCAGGDLIHGAREQWNDGANVLAIAPGEVIAYSRNHVTNKLFEENGIKVHRIPSSELSRGRGGPRCMSMSLVREDI.

Cysteine 400 acts as the Amidino-cysteine intermediate in catalysis.

This sequence belongs to the arginine deiminase family.

It localises to the cytoplasm. It catalyses the reaction L-arginine + H2O = L-citrulline + NH4(+). Its pathway is amino-acid degradation; L-arginine degradation via ADI pathway; carbamoyl phosphate from L-arginine: step 1/2. This chain is Arginine deiminase (arcA), found in Borreliella burgdorferi (strain ATCC 35210 / DSM 4680 / CIP 102532 / B31) (Borrelia burgdorferi).